We begin with the raw amino-acid sequence, 134 residues long: Large ribosomal subunit protein uL16c (134 aa).

Belongs to the universal ribosomal protein uL16 family. In terms of assembly, part of the 50S ribosomal subunit.

Its subcellular location is the plastid. It is found in the chloroplast. This is Large ribosomal subunit protein uL16c from Solanum lycopersicum (Tomato).